The following is a 209-amino-acid chain: Outer-membrane lipoprotein LolB (209 aa).

Residues 1–17 (MKKSTLLFSLMAMALSG) form the signal peptide. Cys18 is lipidated: N-palmitoyl cysteine. A lipid anchor (S-diacylglycerol cysteine) is attached at Cys18.

The protein belongs to the LolB family. As to quaternary structure, monomer.

Its subcellular location is the cell outer membrane. Its function is as follows. Plays a critical role in the incorporation of lipoproteins in the outer membrane after they are released by the LolA protein. The sequence is that of Outer-membrane lipoprotein LolB from Haemophilus ducreyi (strain 35000HP / ATCC 700724).